Here is a 441-residue protein sequence, read N- to C-terminus: CBL-interacting serine/threonine-protein kinase 3 (441 aa).

Residues 14-269 form the Protein kinase domain; the sequence is YEVGRTIGEG…PQEVFEDEWF (256 aa). Residues 20 to 28 and Lys43 each bind ATP; that span reads IGEGTFAKV. The Proton acceptor role is filled by Asp137. An activation loop region spans residues 155–184; it reads DFGLSALSQQVRDDGLLHTSCGTPNYVAPE. Residues 307–331 form the NAF domain; the sequence is EQPAAINAFEIISMSRGLNLENLFD. The PPI stretch occupies residues 337–366; it reads KRETRITLRGGANEIIEKIEEAAKPLGFDV.

It belongs to the protein kinase superfamily. CAMK Ser/Thr protein kinase family. SNF1 subfamily. Interacts with CBL3 and CBL9. The cofactor is Mn(2+). Mostly expressed in germinating seeds and young seedlings. Detected at low levels in roots, stems, leaves and flowers.

The catalysed reaction is L-seryl-[protein] + ATP = O-phospho-L-seryl-[protein] + ADP + H(+). The enzyme catalyses L-threonyl-[protein] + ATP = O-phospho-L-threonyl-[protein] + ADP + H(+). Involved in the resistance to some abiotic stresses (e.g. high salt, hyperosmotic stress) in young seedlings, by regulating the expression of several stress-inducible genes (cold- and salt-induced genes but not drought-responsive genes). Required for the ABA response during germination. CIPK serine-threonine protein kinases interact with CBL proteins. Binding of a CBL protein to the regulatory NAF domain of CIPK protein lead to the activation of the kinase in a calcium-dependent manner. The CBL9/CIPK3 complex acts in the regulation of abscisic acid response in seed germination. This Arabidopsis thaliana (Mouse-ear cress) protein is CBL-interacting serine/threonine-protein kinase 3 (CIPK3).